The following is a 215-amino-acid chain: N-(5'-phosphoribosyl)anthranilate isomerase (215 aa).

This sequence belongs to the TrpF family.

The enzyme catalyses N-(5-phospho-beta-D-ribosyl)anthranilate = 1-(2-carboxyphenylamino)-1-deoxy-D-ribulose 5-phosphate. It functions in the pathway amino-acid biosynthesis; L-tryptophan biosynthesis; L-tryptophan from chorismate: step 3/5. The chain is N-(5'-phosphoribosyl)anthranilate isomerase from Paracoccus denitrificans (strain Pd 1222).